The sequence spans 301 residues: Inactive C-alpha-formylglycine-generating enzyme 2 (301 aa).

An N-terminal signal peptide occupies residues 1–25 (MGISLSPLLTVLSLLSGRWLELGNG). Cysteine 156 and cysteine 290 are joined by a disulfide. Asparagine 191 carries an N-linked (GlcNAc...) asparagine glycan. The Ca(2+) site is built by asparagine 194, leucine 195, aspartate 208, phenylalanine 210, aspartate 229, glycine 232, valine 234, and glutamate 236. Polar residues predominate over residues 274–284 (RMGNTPDSASD). Residues 274–301 (RMGNTPDSASDNLGFRCASGAGRPPGEL) form a disordered region. A Non-canonical ER retention motif motif is present at residues 298 to 301 (PGEL).

It belongs to the sulfatase-modifying factor family. Homodimer and heterodimer with SUMF1.

It is found in the endoplasmic reticulum lumen. Lacks formylglycine generating activity and is unable to convert newly synthesized inactive sulfatases to their active form. Inhibits the activation of sulfatases by SUMF1. The polypeptide is Inactive C-alpha-formylglycine-generating enzyme 2 (Bos taurus (Bovine)).